Here is a 316-residue protein sequence, read N- to C-terminus: Haloacid dehalogenase-like hydrolase domain-containing protein At4g39970 (316 aa).

A chloroplast-targeting transit peptide spans 1 to 46 (MAVSCNHSAILFSPSSTAGSSSVTSSSSLIGFPRFQTLRFKSRSVY). Aspartate 69 acts as the Nucleophile in catalysis. The Mg(2+) site is built by aspartate 69, aspartate 71, and aspartate 259. Catalysis depends on aspartate 71, which acts as the Proton donor.

This sequence belongs to the HAD-like hydrolase superfamily. DOG/GPP family. It depends on Mg(2+) as a cofactor.

It is found in the plastid. The protein localises to the chloroplast. This chain is Haloacid dehalogenase-like hydrolase domain-containing protein At4g39970, found in Arabidopsis thaliana (Mouse-ear cress).